A 264-amino-acid polypeptide reads, in one-letter code: Short chain dehydrogenase/reductase nsrJ (264 aa).

4 residues coordinate NADP(+): isoleucine 24, aspartate 70, asparagine 97, and arginine 130. Active-site proton donor residues include serine 146 and serine 147. Residues tyrosine 161, lysine 165, and threonine 196 each coordinate NADP(+). Residue tyrosine 161 is the Proton acceptor of the active site. Lysine 165 acts as the Lowers pKa of active site Tyr in catalysis.

The protein belongs to the short-chain dehydrogenases/reductases (SDR) family.

The protein operates within secondary metabolite biosynthesis. In terms of biological role, short chain dehydrogenase/reductase; part of the gene cluster that mediates the biosynthesis of the tetrahydroxanthone dimer neosartorin, which exhibits antibacterial activity. The two different monomeric units appear to be synthesized by the same set of enzymes, among which the Baeyer-Villiger monooxygenase nsrF is the key enzyme for the divergence of the biosynthetic routes. The pathway begins with the synthesis of atrochrysone thioester by the polyketide synthase nsrB. The atrochrysone carboxyl ACP thioesterase nsrC then breaks the thioester bond and releases the atrochrysone carboxylic acid from AacuL. Atrochrysone carboxylic acid is decarboxylated by the decarboxylase nsrE, and oxidized by the anthrone oxygenase nsrD to yield emodin. Emodin is then reduced to emodin hydroquinone by the oxidoreductase nsrR. A-ring reduction by the short chain dehydrogenase nsrJ, dehydration by the scytalone dehydratase-like protein nsrI and probable spontaneous re-oxidation, results in overall deoxygenation to chrysophanol. The Baeyer-Villiger monooxygenase nsrF accepts chrysophanol as a substrate to insert one oxygen atom at two different positions to yield the precursors of both monomric units. NsrF is promiscuous/flexible in interacting with the 2 (non methylated and methylated) aromatic rings of chrysophanol, thus diverging the biosynthetic pathway at this point. After the hydrolysis of the lactones, methylesterification by the methyltransferase nsrG yields respectively moniliphenone and 2,2',6'-trihydroxy-4-methyl-6-methoxya-cyldiphenylmethanone. The next steps are the hydroxylation by the FAD-dependent monooxygenase nsrK, followed by isomerization by the monooxygenase nsrQ. The short chain dehydrogenase/reductase nsrO then catalyzes the C-5 ketoreduction to give the xanthone skeleton of blennolide C and 5-acetylblennolide A. The acetyltransferase nsrL has a strict substrate specificity and uses only blennolide A but not blennolide C to yield 5-acetylblennolide A as the single-acetylated product. In the final step of the biosynthesis, the heterodimerization of the 2 xanthones, blennolide C and 5-acetylblennolide A, is catalyzed by the cytochrome P450 monooxygenase nsrP. NsrP can utilize at least three different xanthones as its substrates to perform the dimerization reaction. The sequence is that of Short chain dehydrogenase/reductase nsrJ from Aspergillus novofumigatus (strain IBT 16806).